The primary structure comprises 348 residues: Protein arginine N-methyltransferase 1 (348 aa).

One can recognise an SAM-dependent MTase PRMT-type domain in the interval 24–342; sequence KDYYFDSYAH…KGEVCDLNEQ (319 aa). S-adenosyl-L-methionine-binding residues include His37, Arg46, Gly70, Glu92, and Glu121. Active-site residues include Glu139 and Glu148.

Belongs to the class I-like SAM-binding methyltransferase superfamily. Protein arginine N-methyltransferase family. As to quaternary structure, interacts with daf-16. Interacts with pgl-1 and pgl-3. Interacts with alg-1. In terms of tissue distribution, widely expressed in pharyngeal, body wall muscle, intestinal and vulval cells.

The protein resides in the cytoplasm. It is found in the nucleus. The catalysed reaction is L-arginyl-[protein] + 2 S-adenosyl-L-methionine = N(omega),N(omega)-dimethyl-L-arginyl-[protein] + 2 S-adenosyl-L-homocysteine + 2 H(+). It catalyses the reaction L-arginyl-[protein] + S-adenosyl-L-methionine = N(omega)-methyl-L-arginyl-[protein] + S-adenosyl-L-homocysteine + H(+). Functionally, arginine methyltransferase that methylates (mono and asymmetric dimethylation) the guanidino nitrogens of arginyl residues present in target proteins. Catalyzes the formation of monomethylarginine and asymmetric dimethylarginine on histones H2A and H4, a specific tag for epigenetic transcriptional activation. Catalyzes asymmetric arginine dimethylation of mitochondrial proteins necessary for mitochondrial oxidative phosphorylation activity and thus aerobic respiration and ATP synthesis, and the mitochondrial stress response. Methylates arginine residues in P-granule components pgl-1 and pgl-3 to promote P-granule degradation by autophagy in somatic cells to ensure exclusive localization of the P-granules in germ cells. Modulates the interaction of P-granule proteins epg-2 and sepa-1. Methylates arginine residues in daf-16, which blocks ftt-2 binding to daf-16, prevents akt-mediated phosphorylation and allows for daf-16 to translocate to the nucleus. In turn, association with daf-16 therefore allows for the transcriptional activation of daf-16 and regulation of longevity-related genes. Maintains lifespan by modulating daf-16 activity downstream of the daf-2 signaling pathway. Plays a role in heat and oxidative stress resistance. Role in stress resistance and also fat storage may be in association with the daf-2 signaling pathway. Required for normal feeding behavior. The sequence is that of Protein arginine N-methyltransferase 1 from Caenorhabditis elegans.